The sequence spans 837 residues: Striatin-interacting protein 1 (837 aa).

An N-acetylmethionine modification is found at Met-1. Disordered stretches follow at residues 1-67 and 333-423; these read MEPA…ESPD and AASP…KGLP. Residues 18 to 35 show a composition bias toward pro residues; that stretch reads PQPPPPPPPATAQPPPGA. Residues 36 to 46 are compositionally biased toward low complexity; sequence PRAAAGLLPGG. Over residues 47–60 the composition is skewed to basic and acidic residues; it reads KAREFNRNQRKDSE. Ser-59, Ser-335, and Ser-339 each carry phosphoserine. Over residues 333–343 the composition is skewed to low complexity; that stretch reads AASPPASASDS. The segment covering 356–377 has biased composition (basic and acidic residues); that stretch reads KALIKQDNLDAFNERDPYKADD. Residues 378–391 are compositionally biased toward acidic residues; that stretch reads SREEEEENDDDNSL. Ser-788 carries the phosphoserine modification. A required for STRIPAK core complex formation region spans residues 796–837; the sequence is DNCLQSVLGQRVDLPEDFQMNYDLWLEREVFSKPISWEELLQ.

It belongs to the STRIP family. As to quaternary structure, part of the core of STRIPAK complexes composed of PP2A catalytic and scaffolding subunits, the striatins (PP2A regulatory subunits), the striatin-associated proteins MOB4, STRIP1 and STRIP2, PDCD10 and members of the STE20 kinases, such as STK24 and STK26. The STRIPAK complex can be extended by adapter proteins such as SLMAP:SIKE1, CTTNBP2 or CTTNBP2NL. Interacts with CDC42BPB. Interacts with CTTNBP2NL.

It is found in the cytoplasm. Plays a role in the regulation of cell morphology and cytoskeletal organization. Required in the cortical actin filament dynamics and cell shape. Part of the striatin-interacting phosphatase and kinase (STRIPAK) complexes. STRIPAK complexes have critical roles in protein (de)phosphorylation and are regulators of multiple signaling pathways including Hippo, MAPK, nuclear receptor and cytoskeleton remodeling. Different types of STRIPAK complexes are involved in a variety of biological processes such as cell growth, differentiation, apoptosis, metabolism and immune regulation. This Pongo abelii (Sumatran orangutan) protein is Striatin-interacting protein 1 (STRIP1).